We begin with the raw amino-acid sequence, 133 residues long: Ribonuclease P protein component (133 aa).

The segment at 114–133 (RSRPTPEEKSEPAGVDSTDA) is disordered.

This sequence belongs to the RnpA family. Consists of a catalytic RNA component (M1 or rnpB) and a protein subunit.

The enzyme catalyses Endonucleolytic cleavage of RNA, removing 5'-extranucleotides from tRNA precursor.. In terms of biological role, RNaseP catalyzes the removal of the 5'-leader sequence from pre-tRNA to produce the mature 5'-terminus. It can also cleave other RNA substrates such as 4.5S RNA. The protein component plays an auxiliary but essential role in vivo by binding to the 5'-leader sequence and broadening the substrate specificity of the ribozyme. This Pseudomonas syringae pv. tomato (strain ATCC BAA-871 / DC3000) protein is Ribonuclease P protein component.